A 474-amino-acid chain; its full sequence is Crocetin glucosyltransferase, chloroplastic (474 aa).

The transit peptide at 1 to 45 (MVQQRHVLLITYPAQGHINPALQFAQRLLRMGIQVTLATSVYALS) directs the protein to the chloroplast. Histidine 17 acts as the Proton acceptor in catalysis. Histidine 17 serves as a coordination point for an anthocyanidin. UDP-alpha-D-glucose contacts are provided by glutamine 346, histidine 361, tryptophan 364, asparagine 365, serine 366, glutamate 369, aspartate 385, and glutamine 386.

Belongs to the UDP-glycosyltransferase family. In terms of tissue distribution, ubiquitous.

Its subcellular location is the plastid. The protein resides in the chloroplast. The catalysed reaction is crocetin + UDP-alpha-D-glucose = beta-D-glucosyl crocetin + UDP. The enzyme catalyses beta-D-glucosyl crocetin + UDP-alpha-D-glucose = bis(beta-D-glucosyl) crocetin + UDP. It carries out the reaction beta-D-gentiobiosyl crocetin + UDP-alpha-D-glucose = beta-D-gentiobiosyl beta-D-glucosyl crocetin + UDP. Its function is as follows. Glucosyltransferase acting on a broad range of substrates, including crocetin, 4-coumaric acid, caffeic acid and ferulic acid. No activity with indol-3-acetic acid, bixin and norbixin, and no formation of O-glucosides. Involved with UGT94E5 in sequential glycosylation of crocetin to crocin (bis(beta-D-gentiobiosyl) crocetin). This chain is Crocetin glucosyltransferase, chloroplastic (UGT75L6), found in Gardenia jasminoides (Cape jasmine).